The chain runs to 596 residues: MALAGLPLSVFAIAVHFCLVFSSSSSPPVCPANGHRDRTAYHFQPAKNWQNDPNGPVYYNGMYHLFYQYNPHGALWDVGNLSWGHSVSGDLVNWAALDNALDPTAPFDANGCASGSVTILPDGVPVVMYSGIDARRRQVQNVAFPKNPRDPLLREWTKPGYNPVIPVPADVSPDNFRDPTTAWLGSDGLWRFAISAVADGVGATLVYRSADFLRWERNAAPLHASRDAVMAECPDLFPVAEHGEDGLDLDASAIGGAGAGVRHVLKVSMPDTLEDYYMVGRYDDADDTFTVPPEDLEAHGDDYRRWRRIDHGHLYASKTFYDAGKKRRVLWAWVNESDSEADDVTKGWSGLQSFPRAVWLDEGGRQLVQWPVEEIETLRRKRGVLLGGNEVEAGGLREIGGIAGSQADVEVAFEIASLAGADRLEPDHLRDPDALCGENGAAVHGGIGPFGLLVMASGDLRERTAVFFRVFRLSHGYTVLMCTDLTRSTSRAGVYKPSHGGFVDIDIEKDRAISLRTLIDHSIVESFGGGGRTCMTARVYPEHVATGSSHLYVFNNASDAVKVSKLEAWELATASVNAGDDGLISYGGPVCAAQVQ.

An N-terminal signal peptide occupies residues 1–25 (MALAGLPLSVFAIAVHFCLVFSSSS). Substrate is bound by residues 49-52 (WQND), Gln-68, and Trp-76. Residue Asp-52 is part of the active site. The N-linked (GlcNAc...) asparagine glycan is linked to Asn-80. Residues 113–114 (AS), 177–178 (RD), and Glu-232 each bind substrate. Asn-335 carries an N-linked (GlcNAc...) asparagine glycan. Residues Cys-436 and Cys-482 are joined by a disulfide bond. Asn-556 carries N-linked (GlcNAc...) asparagine glycosylation.

The protein belongs to the glycosyl hydrolase 32 family. Expressed in roots. Weakly expressed in flowers.

It is found in the secreted. Its subcellular location is the extracellular space. The protein localises to the apoplast. The protein resides in the cell wall. The enzyme catalyses Hydrolysis of terminal non-reducing beta-D-fructofuranoside residues in beta-D-fructofuranosides.. This is Beta-fructofuranosidase, insoluble isoenzyme 6 (CIN6) from Oryza sativa subsp. japonica (Rice).